Reading from the N-terminus, the 116-residue chain is Methionine-R-sulfoxide reductase B1 (116 aa).

The MsrB domain maps to 1 to 106 (MSFCSFFGGE…FSSSLKFVPK (106 aa)). Residues Cys-23, Cys-26, Cys-71, and Cys-74 each coordinate Zn(2+). Catalysis depends on Sec-95, which acts as the Nucleophile. A non-standard amino acid (selenocysteine) is located at residue Sec-95.

Belongs to the MsrB Met sulfoxide reductase family. Zn(2+) serves as cofactor. Truncated MSRB1/SEPX1 proteins produced by failed UGA/Sec decoding are ubiquitinated by the CRL2(FEM1C) E3 ubiquitin-protein ligase complex.

It is found in the cytoplasm. The protein localises to the nucleus. The protein resides in the cytoskeleton. It catalyses the reaction L-methionyl-[protein] + [thioredoxin]-disulfide + H2O = L-methionyl-(R)-S-oxide-[protein] + [thioredoxin]-dithiol. The catalysed reaction is [thioredoxin]-disulfide + L-methionine + H2O = L-methionine (R)-S-oxide + [thioredoxin]-dithiol. Methionine-sulfoxide reductase that specifically reduces methionine (R)-sulfoxide back to methionine. While in many cases, methionine oxidation is the result of random oxidation following oxidative stress, methionine oxidation is also a post-translational modification that takes place on specific residue. Acts as a regulator of actin assembly by reducing methionine (R)-sulfoxide mediated by MICALs (MICAL1, MICAL2 or MICAL3) on actin, thereby promoting filament repolymerization. Plays a role in innate immunity by reducing oxidized actin, leading to actin repolymerization in macrophages. The chain is Methionine-R-sulfoxide reductase B1 (MSRB1) from Pongo abelii (Sumatran orangutan).